The following is a 142-amino-acid chain: Galactose-binding lectin l-1 (142 aa).

In terms of domain architecture, Galectin spans 3 to 134 (FVEVKNLIMK…DATVKNISVN (132 aa)). 68–74 (WQEEQRD) is a binding site for a beta-D-galactoside. N-linked (GlcNAc...) asparagine glycosylation is present at N130.

As to quaternary structure, homodimer. Post-translationally, the N-terminus is blocked. As to expression, skin; highest expression in that of individuals showing resistance to infectious disease.

It localises to the secreted. Its function is as follows. Involved in host defense at the body surface. Causes agglutination of the Gram-positive bacterium S.difficile. Possesses calcium-independent hemagglutinating activity. The sequence is that of Galactose-binding lectin l-1 from Anguilla japonica (Japanese eel).